The sequence spans 91 residues: Large ribosomal subunit protein bL27 (91 aa).

A disordered region spans residues 1-21 (MAHKKSGGSSRNGRDSAGRRL).

The protein belongs to the bacterial ribosomal protein bL27 family.

This Phenylobacterium zucineum (strain HLK1) protein is Large ribosomal subunit protein bL27.